A 336-amino-acid polypeptide reads, in one-letter code: Pyridoxal 5'-phosphate synthase subunit PdxS (336 aa).

Asp64 lines the D-ribose 5-phosphate pocket. Lys121 acts as the Schiff-base intermediate with D-ribose 5-phosphate in catalysis. Position 193 (Gly193) interacts with D-ribose 5-phosphate. Lys205 contacts D-glyceraldehyde 3-phosphate. D-ribose 5-phosphate-binding positions include Gly254 and 275 to 276; that span reads GS.

The protein belongs to the PdxS/SNZ family. In terms of assembly, in the presence of PdxT, forms a dodecamer of heterodimers.

It carries out the reaction aldehydo-D-ribose 5-phosphate + D-glyceraldehyde 3-phosphate + L-glutamine = pyridoxal 5'-phosphate + L-glutamate + phosphate + 3 H2O + H(+). It participates in cofactor biosynthesis; pyridoxal 5'-phosphate biosynthesis. In terms of biological role, catalyzes the formation of pyridoxal 5'-phosphate from ribose 5-phosphate (RBP), glyceraldehyde 3-phosphate (G3P) and ammonia. The ammonia is provided by the PdxT subunit. Can also use ribulose 5-phosphate and dihydroxyacetone phosphate as substrates, resulting from enzyme-catalyzed isomerization of RBP and G3P, respectively. The sequence is that of Pyridoxal 5'-phosphate synthase subunit PdxS from Pyrobaculum aerophilum (strain ATCC 51768 / DSM 7523 / JCM 9630 / CIP 104966 / NBRC 100827 / IM2).